The chain runs to 609 residues: 2',5'-phosphodiesterase 12 (609 aa).

Residues 1 to 42 (MWRLPGARAALRVIRTAVEKLSRAEAGSQTAAGAMERAVVRC) constitute a mitochondrion transit peptide. A compositionally biased stretch (basic residues) spans 89 to 99 (AAAAKKSRKSR). Disordered stretches follow at residues 89 to 111 (AAAA…CSGP) and 206 to 230 (AEPE…ETDV). 2 stretches are compositionally biased toward low complexity: residues 100–111 (PNASGGAACSGP) and 213–224 (PSSLSPSSPSSS). Ser217 carries the phosphoserine modification. The Mg(2+) site is built by Glu351, Asp496, and Asn498. The active-site Proton donor/acceptor is the Asp496.

Belongs to the CCR4/nocturin family. Requires Mg(2+) as cofactor. As to expression, ubiquitous.

Its subcellular location is the mitochondrion matrix. The catalysed reaction is Exonucleolytic cleavage of poly(A) to 5'-AMP.. Its function is as follows. Enzyme that cleaves 2',5'-phosphodiester bond linking adenosines of the 5'-triphosphorylated oligoadenylates, triphosphorylated oligoadenylates referred as 2-5A modulates the 2-5A system. Degrades triphosphorylated 2-5A to produce AMP and ATP. Also cleaves 3',5'-phosphodiester bond of oligoadenylates. Plays a role as a negative regulator of the 2-5A system that is one of the major pathways for antiviral and antitumor functions induced by interferons (IFNs). Suppression of this enzyme increases cellular 2-5A levels and decreases viral replication in cultured small-airway epithelial cells and Hela cells. The protein is 2',5'-phosphodiesterase 12 (PDE12) of Homo sapiens (Human).